The following is a 469-amino-acid chain: NADH-quinone oxidoreductase subunit N (469 aa).

14 consecutive transmembrane segments (helical) span residues 9 to 29 (PLLM…LIAG), 40 to 60 (VGVM…VQMV), 76 to 96 (ATGV…AVAG), 105 to 125 (EAET…LAGA), 128 to 148 (LLLL…LVGL), 162 to 182 (YLMG…LYGL), 201 to 221 (VAVA…AGGV), 234 to 254 (ANAT…LVAL), 265 to 285 (LAWP…GNLA), 294 to 316 (RLLG…VAGA), 327 to 347 (YLGG…ALPG), 365 to 385 (AAAL…AVFI), 402 to 422 (LAVV…RWII), and 448 to 468 (VLAA…WQLV).

The protein belongs to the complex I subunit 2 family. In terms of assembly, NDH-1 is composed of 14 different subunits. Subunits NuoA, H, J, K, L, M, N constitute the membrane sector of the complex.

Its subcellular location is the cell membrane. The catalysed reaction is a quinone + NADH + 5 H(+)(in) = a quinol + NAD(+) + 4 H(+)(out). NDH-1 shuttles electrons from NADH, via FMN and iron-sulfur (Fe-S) centers, to quinones in the respiratory chain. The immediate electron acceptor for the enzyme in this species is believed to be a menaquinone. Couples the redox reaction to proton translocation (for every two electrons transferred, four hydrogen ions are translocated across the cytoplasmic membrane), and thus conserves the redox energy in a proton gradient. This chain is NADH-quinone oxidoreductase subunit N, found in Mycobacterium sp. (strain JLS).